A 110-amino-acid polypeptide reads, in one-letter code: T cell receptor alpha variable 35 (110 aa).

Positions M1–G19 are cleaved as a signal peptide. The Ig-like domain occupies Q20 to Q110. Residues N40 and N93 are each glycosylated (N-linked (GlcNAc...) asparagine). An intrachain disulfide couples C41 to C107.

As to quaternary structure, alpha-beta TR is a heterodimer composed of an alpha and beta chain; disulfide-linked. The alpha-beta TR is associated with the transmembrane signaling CD3 coreceptor proteins to form the TR-CD3 (TcR or TCR). The assembly of alpha-beta TR heterodimers with CD3 occurs in the endoplasmic reticulum where a single alpha-beta TR heterodimer associates with one CD3D-CD3E heterodimer, one CD3G-CD3E heterodimer and one CD247 homodimer forming a stable octameric structure. CD3D-CD3E and CD3G-CD3E heterodimers preferentially associate with TR alpha and TR beta chains, respectively. The association of the CD247 homodimer is the last step of TcR assembly in the endoplasmic reticulum and is required for transport to the cell surface.

It is found in the cell membrane. V region of the variable domain of T cell receptor (TR) alpha chain that participates in the antigen recognition. Alpha-beta T cell receptors are antigen specific receptors which are essential to the immune response and are present on the cell surface of T lymphocytes. Recognize peptide-major histocompatibility (MH) (pMH) complexes that are displayed by antigen presenting cells (APC), a prerequisite for efficient T cell adaptive immunity against pathogens. Binding of alpha-beta TR to pMH complex initiates TR-CD3 clustering on the cell surface and intracellular activation of LCK that phosphorylates the ITAM motifs of CD3G, CD3D, CD3E and CD247 enabling the recruitment of ZAP70. In turn ZAP70 phosphorylates LAT, which recruits numerous signaling molecules to form the LAT signalosome. The LAT signalosome propagates signal branching to three major signaling pathways, the calcium, the mitogen-activated protein kinase (MAPK) kinase and the nuclear factor NF-kappa-B (NF-kB) pathways, leading to the mobilization of transcription factors that are critical for gene expression and essential for T cell growth and differentiation. The T cell repertoire is generated in the thymus, by V-(D)-J rearrangement. This repertoire is then shaped by intrathymic selection events to generate a peripheral T cell pool of self-MH restricted, non-autoaggressive T cells. Post-thymic interaction of alpha-beta TR with the pMH complexes shapes TR structural and functional avidity. The protein is T cell receptor alpha variable 35 of Homo sapiens (Human).